Here is a 431-residue protein sequence, read N- to C-terminus: Tol-Pal system protein TolB (431 aa).

Positions 1 to 26 (MSLMTKLGFRALVASCLITAGSAANA) are cleaved as a signal peptide. The disordered stretch occupies residues 411-431 (PQILSVQGGSVREPSWGPFMQ).

It belongs to the TolB family. As to quaternary structure, the Tol-Pal system is composed of five core proteins: the inner membrane proteins TolA, TolQ and TolR, the periplasmic protein TolB and the outer membrane protein Pal. They form a network linking the inner and outer membranes and the peptidoglycan layer.

The protein localises to the periplasm. In terms of biological role, part of the Tol-Pal system, which plays a role in outer membrane invagination during cell division and is important for maintaining outer membrane integrity. This is Tol-Pal system protein TolB from Burkholderia lata (strain ATCC 17760 / DSM 23089 / LMG 22485 / NCIMB 9086 / R18194 / 383).